A 466-amino-acid polypeptide reads, in one-letter code: 3-isopropylmalate dehydratase large subunit (466 aa).

Residues cysteine 347, cysteine 407, and cysteine 410 each coordinate [4Fe-4S] cluster.

Belongs to the aconitase/IPM isomerase family. LeuC type 1 subfamily. In terms of assembly, heterodimer of LeuC and LeuD. [4Fe-4S] cluster is required as a cofactor.

It carries out the reaction (2R,3S)-3-isopropylmalate = (2S)-2-isopropylmalate. It functions in the pathway amino-acid biosynthesis; L-leucine biosynthesis; L-leucine from 3-methyl-2-oxobutanoate: step 2/4. Functionally, catalyzes the isomerization between 2-isopropylmalate and 3-isopropylmalate, via the formation of 2-isopropylmaleate. This is 3-isopropylmalate dehydratase large subunit from Shigella dysenteriae serotype 1 (strain Sd197).